Reading from the N-terminus, the 1124-residue chain is Zinc finger E-box-binding homeobox 1 (1124 aa).

2 disordered regions span residues 1-124 (MADG…NHDP) and 142-163 (APEEDQRQGTPEASGHDENGTP). A compositionally biased stretch (low complexity) spans 18-30 (NNVTNYNTVVETN). Serine 31 and serine 33 each carry phosphoserine. The segment covering 44 to 62 (EESVTDAADCEGVPEDDLP) has biased composition (acidic residues). Over residues 72–91 (SSEREGNAKNCWEDDRKEGQ) the composition is skewed to basic and acidic residues. The C2H2-type 1 zinc finger occupies 170–193 (LTCPYCDRGYKRFTSLKEHIKYRH). Residues lysine 186 and lysine 195 each participate in a glycyl lysine isopeptide (Lys-Gly) (interchain with G-Cter in SUMO2) cross-link. 2 consecutive C2H2-type zinc fingers follow at residues 200-222 (FSCSLCSYTFAYRTQLERHMTSH) and 240-262 (FKCTECGKAFKYKHHLKEHLRIH). The C2H2-type 4; atypical zinc finger occupies 268–292 (YECPNCKKRFSHSGSYSSHISSKKC). The disordered stretch occupies residues 304–327 (TGLKTSQCSSPSLSASPGSPTRPQ). A Glycyl lysine isopeptide (Lys-Gly) (interchain with G-Cter in SUMO2) cross-link involves residue lysine 307. The segment covering 309–322 (SQCSSPSLSASPGS) has biased composition (low complexity). 2 positions are modified to phosphoserine: serine 313 and serine 322. Glycyl lysine isopeptide (Lys-Gly) (interchain with G-Cter in SUMO2) cross-links involve residues lysine 331 and lysine 335. Lysine 347 participates in a covalent cross-link: Glycyl lysine isopeptide (Lys-Gly) (interchain with G-Cter in SUMO); alternate. A Glycyl lysine isopeptide (Lys-Gly) (interchain with G-Cter in SUMO2); alternate cross-link involves residue lysine 347. Glycyl lysine isopeptide (Lys-Gly) (interchain with G-Cter in SUMO2) cross-links involve residues lysine 439, lysine 493, lysine 504, lysine 515, lysine 548, and lysine 553. 2 disordered regions span residues 551–586 (DLKQPTQPPPLPAAEAEKPESSVSSATGDGNLSPSQ) and 636–714 (QISV…SSSR). The segment at residues 581–640 (NLSPSQPPLKNLLSLLKAYYALNAQPSAEELSKIADSVNLPLDVVKKWFEKMQAGQISVQ) is a DNA-binding region (homeobox; atypical). 5 positions are modified to phosphoserine: serine 642, serine 679, serine 686, serine 693, and serine 700. The segment covering 656–687 (AKNNDQPQSANANEPQDSTVNLQSPLKMTNSP) has biased composition (polar residues). The segment covering 692-714 (GSTTNGSRSSTPSPSPLNLSSSR) has biased composition (low complexity). Threonine 702 carries the post-translational modification Phosphothreonine. Phosphoserine is present on serine 704. Lysine 774 participates in a covalent cross-link: Glycyl lysine isopeptide (Lys-Gly) (interchain with G-Cter in SUMO); alternate. Residue lysine 774 forms a Glycyl lysine isopeptide (Lys-Gly) (interchain with G-Cter in SUMO2); alternate linkage. The tract at residues 856–898 (PPLKVIQPNGNQDERQDTSSEGVSNVEDQNDSDSTPPKKKMRK) is disordered. Over residues 874-890 (SSEGVSNVEDQNDSDST) the composition is skewed to polar residues. C2H2-type zinc fingers lie at residues 904-926 (YACDLCDKIFQKSSSLLRHKYEH) and 932-954 (HECGICKKAFKHKHHLIEHMRLH). The C2H2-type 7; atypical zinc-finger motif lies at 960-981 (YQCDKCGKRFSHSGSYSQHMNH). The segment at 989–1124 (EAEERDSTEQ…QVSEEKTNEA (136 aa)) is disordered. Acidic residues-rich tracts occupy residues 1031–1052 (EEDEDSEKEEEEEDKEMEELQE) and 1062–1084 (DEEEEEEEEEVEEEEVEEAENEG). Over residues 1085–1099 (EEAKTEGLMKDDRAE) the composition is skewed to basic and acidic residues. The span at 1100–1115 (SQASSLGQKVGESSEQ) shows a compositional bias: polar residues.

It belongs to the delta-EF1/ZFH-1 C2H2-type zinc-finger family. Interacts (via N-terminus) with SMARCA4/BRG1. Ubiquitinated, leading to degradation in a proteasome-dependent manner. Deubiquitinated by USP51, leading to stabilization. As to expression, colocalizes with SMARCA4/BRG1 in E-cadherin-negative cells from established lines, and stroma of normal colon as well as in de-differentiated epithelial cells at the invasion front of colorectal carcinomas (at protein level). Expressed in heart and skeletal muscle, but not in liver, spleen, or pancreas.

Its subcellular location is the nucleus. In terms of biological role, acts as a transcriptional repressor. Inhibits interleukin-2 (IL-2) gene expression. Enhances or represses the promoter activity of the ATP1A1 gene depending on the quantity of cDNA and on the cell type. Represses E-cadherin promoter and induces an epithelial-mesenchymal transition (EMT) by recruiting SMARCA4/BRG1. Represses BCL6 transcription in the presence of the corepressor CTBP1. Positively regulates neuronal differentiation. Represses RCOR1 transcription activation during neurogenesis. Represses transcription by binding to the E box (5'-CANNTG-3'). In the absence of TGFB1, acts as a repressor of COL1A2 transcription via binding to the E-box in the upstream enhancer region. This is Zinc finger E-box-binding homeobox 1 from Homo sapiens (Human).